The following is a 466-amino-acid chain: Argininosuccinate lyase (466 aa).

This sequence belongs to the lyase 1 family. Argininosuccinate lyase subfamily.

The protein resides in the cytoplasm. The enzyme catalyses 2-(N(omega)-L-arginino)succinate = fumarate + L-arginine. The protein operates within amino-acid biosynthesis; L-arginine biosynthesis; L-arginine from L-ornithine and carbamoyl phosphate: step 3/3. This chain is Argininosuccinate lyase, found in Ehrlichia ruminantium (strain Gardel).